Here is a 554-residue protein sequence, read N- to C-terminus: Formate--tetrahydrofolate ligase (554 aa).

64 to 71 (TPYGEGKT) provides a ligand contact to ATP.

Belongs to the formate--tetrahydrofolate ligase family.

The enzyme catalyses (6S)-5,6,7,8-tetrahydrofolate + formate + ATP = (6R)-10-formyltetrahydrofolate + ADP + phosphate. The protein operates within one-carbon metabolism; tetrahydrofolate interconversion. The chain is Formate--tetrahydrofolate ligase from Caldicellulosiruptor saccharolyticus (strain ATCC 43494 / DSM 8903 / Tp8T 6331).